The following is a 94-amino-acid chain: Neutrophil defensin 3 (94 aa).

A signal peptide spans 1–19 (MRTLAILAAILLVALQAQA). The propeptide occupies 20–38 (EPLQARADEVAAAPEQIAA). 3 cysteine pairs are disulfide-bonded: C66–C94, C68–C83, and C73–C93.

Belongs to the alpha-defensin family. As to quaternary structure, dimer. In terms of assembly, (Microbial infection) Interacts with herpes virus 1 HHV-1 envelope glycoprotein B; this interaction inhibits viral infection.

It is found in the secreted. Its function is as follows. Effector molecule of the innate immune system that acts via antibiotic-like properties against a broad array of infectious agents including bacteria, fungi, and viruses. Possesses the ability to neutralize bacterial toxins such as B.anthracis lethal factor, Clostridium difficile cytotoxin B as well as leukocidin produced by Staphylococcus aureus. Also blocks herpes simplex virus infection by interacting with envelope glycoprotein B and thus preventing its binding to heparan sulfate, the receptor for attachment. In Homo sapiens (Human), this protein is Neutrophil defensin 3 (DEFA3).